We begin with the raw amino-acid sequence, 503 residues long: Pentatricopeptide repeat-containing protein At2g30100, chloroplastic (503 aa).

The N-terminal 50 residues, 1-50 (MAYAHVFASLTISTISLRRFLPRLHRNHSVKPNSRIICNLKLNYSAGKFR), are a transit peptide targeting the chloroplast. PPR repeat units follow at residues 341–375 (IGVVHERLLAMYICAGRGPEAEKQLWKMKLAGREP), 376–410 (EADLHDIVMAICASQKEVNAVSRLLTRVEFMGSQR), and 411–445 (KKKTLSWLLRGYVKGGHFEEAAETLVSMIDSGLHP).

The protein belongs to the PPR family. P subfamily.

Its subcellular location is the plastid. It localises to the chloroplast. This is Pentatricopeptide repeat-containing protein At2g30100, chloroplastic from Arabidopsis thaliana (Mouse-ear cress).